The sequence spans 395 residues: MDEEPERTKRWEGGYERTWEILKEDESGSLKATIEDILFKAKRKRVFEHHGQVRLGMMRHLYVVVDGSRTMEDQDLKPNRLTCTLKLLEYFVEEYFDQNPISQIGIIVTKSKRAEKLTELSGNPRKHITSLKEAVDMTCHGEPSLYNSLSMAMQTLKHMPGHTSREVLIIFSSLTTCDPSNIYDLIKTLKAAKIRVSVIGLSAEVRVCTVLARETGGTYHVILDESHYKELLTHHLSPPPASSSSECSLIRMGFPQHTIASLSDQDAKPSFSMAHLDGNTEPGLTLGGYFCPQCRAKYCELPVECKICGLTLVSAPHLARSYHHLFPLDAFQEIPLEEYNGERFCYGCQGELKDQHVYVCAVCQNVFCVDCDVFVHDSLHCCPGCIHKIPAPSGV.

In terms of domain architecture, VWFA spans 60–236; the sequence is HLYVVVDGSR…HYKELLTHHL (177 aa). Y95 carries the phosphotyrosine modification. Residues 291-308 form a C4-type zinc finger; the sequence is CPQCRAKYCELPVECKIC.

The protein belongs to the GTF2H2 family.

The protein localises to the nucleus. Functionally, component of the core-TFIIH basal transcription factor involved in nucleotide excision repair (NER) of DNA and, when complexed to CAK, in RNA transcription by RNA polymerase II. This is General transcription factor IIH subunit 2-like protein (GTF2H2C) from Homo sapiens (Human).